Here is a 162-residue protein sequence, read N- to C-terminus: 2-C-methyl-D-erythritol 2,4-cyclodiphosphate synthase (162 aa).

A divalent metal cation-binding residues include aspartate 8 and histidine 10. 4-CDP-2-C-methyl-D-erythritol 2-phosphate contacts are provided by residues 8-10 (DVH) and 36-37 (HS). Residue histidine 44 participates in a divalent metal cation binding. 4-CDP-2-C-methyl-D-erythritol 2-phosphate contacts are provided by residues 58 to 60 (DIG), 63 to 67 (FPDTD), 102 to 108 (AQAPKMA), 134 to 137 (TTTE), phenylalanine 141, and arginine 144.

Belongs to the IspF family. In terms of assembly, homotrimer. The cofactor is a divalent metal cation.

It catalyses the reaction 4-CDP-2-C-methyl-D-erythritol 2-phosphate = 2-C-methyl-D-erythritol 2,4-cyclic diphosphate + CMP. The protein operates within isoprenoid biosynthesis; isopentenyl diphosphate biosynthesis via DXP pathway; isopentenyl diphosphate from 1-deoxy-D-xylulose 5-phosphate: step 4/6. In terms of biological role, involved in the biosynthesis of isopentenyl diphosphate (IPP) and dimethylallyl diphosphate (DMAPP), two major building blocks of isoprenoid compounds. Catalyzes the conversion of 4-diphosphocytidyl-2-C-methyl-D-erythritol 2-phosphate (CDP-ME2P) to 2-C-methyl-D-erythritol 2,4-cyclodiphosphate (ME-CPP) with a corresponding release of cytidine 5-monophosphate (CMP). The chain is 2-C-methyl-D-erythritol 2,4-cyclodiphosphate synthase from Yersinia pseudotuberculosis serotype O:1b (strain IP 31758).